Consider the following 421-residue polypeptide: Serine--tRNA ligase (421 aa).

L-serine is bound at residue 230 to 232 (TAE). 261–263 (RRE) serves as a coordination point for ATP. An L-serine-binding site is contributed by Glu284. 348–351 (EISS) is a binding site for ATP. L-serine is bound at residue Ser383.

The protein belongs to the class-II aminoacyl-tRNA synthetase family. Type-1 seryl-tRNA synthetase subfamily. Homodimer. The tRNA molecule binds across the dimer.

Its subcellular location is the cytoplasm. It catalyses the reaction tRNA(Ser) + L-serine + ATP = L-seryl-tRNA(Ser) + AMP + diphosphate + H(+). The catalysed reaction is tRNA(Sec) + L-serine + ATP = L-seryl-tRNA(Sec) + AMP + diphosphate + H(+). It participates in aminoacyl-tRNA biosynthesis; selenocysteinyl-tRNA(Sec) biosynthesis; L-seryl-tRNA(Sec) from L-serine and tRNA(Sec): step 1/1. Catalyzes the attachment of serine to tRNA(Ser). Is also able to aminoacylate tRNA(Sec) with serine, to form the misacylated tRNA L-seryl-tRNA(Sec), which will be further converted into selenocysteinyl-tRNA(Sec). This is Serine--tRNA ligase from Finegoldia magna (strain ATCC 29328 / DSM 20472 / WAL 2508) (Peptostreptococcus magnus).